The following is a 487-amino-acid chain: Keratin, type I cytoskeletal 12 (487 aa).

The interval 1–118 is head; it reads MSLSVCTSAL…GNDGGLLSGS (118 aa). The interval 119–154 is coil 1A; it reads EKETMQNLNDRLASYLGKVRSLEEANAELENKIREW. One can recognise an IF rod domain in the interval 119–433; it reads EKETMQNLND…RLLEGDSQGD (315 aa). A linker 1 region spans residues 158 to 175; it reads RRTRDAGSQSDYSKYYPL. Residues 176–267 are coil 1B; it reads IEDLKNKIVS…KNHEEELQSF (92 aa). The linker 12 stretch occupies residues 268–290; that stretch reads QAGGPGEVNVEMDAAPGVDLTKV. The tract at residues 291–428 is coil 2; sequence LNEMRAQYEA…IETYRRLLEG (138 aa). The disordered stretch occupies residues 428–461; it reads GDSQGDGFDESSSLSVSKPQTPSVDSSKDPNKTR. The tail stretch occupies residues 429-487; the sequence is DSQGDGFDESSSLSVSKPQTPSVDSSKDPNKTRKIKTVVQEIVNGEVVSSQVQELEEEM. Positions 437–452 are enriched in polar residues; that stretch reads ESSSLSVSKPQTPSVD.

It belongs to the intermediate filament family. As to quaternary structure, heterotetramer of two type I and two type II keratins. Keratin-3 associates with keratin-12. Expressed in the corneal epithelium (at protein level). Also expressed in the suprabasal limbal epithelium of the cornea (at protein level).

Involved in corneal epithelium organization, integrity and corneal keratin expression. This chain is Keratin, type I cytoskeletal 12 (Krt12), found in Mus musculus (Mouse).